Reading from the N-terminus, the 343-residue chain is Methionine import ATP-binding protein MetN (343 aa).

The ABC transporter domain maps to 2 to 241 (IKLSNITKVF…PKTPLAQKFI (240 aa)). An ATP-binding site is contributed by 38 to 45 (GASGAGKS).

Belongs to the ABC transporter superfamily. Methionine importer (TC 3.A.1.24) family. In terms of assembly, the complex is composed of two ATP-binding proteins (MetN), two transmembrane proteins (MetI) and a solute-binding protein (MetQ).

The protein localises to the cell inner membrane. It catalyses the reaction L-methionine(out) + ATP + H2O = L-methionine(in) + ADP + phosphate + H(+). The catalysed reaction is D-methionine(out) + ATP + H2O = D-methionine(in) + ADP + phosphate + H(+). Its function is as follows. Part of the ABC transporter complex MetNIQ involved in methionine import. Responsible for energy coupling to the transport system. The sequence is that of Methionine import ATP-binding protein MetN from Shigella boydii serotype 4 (strain Sb227).